We begin with the raw amino-acid sequence, 452 residues long: Glycylpeptide N-tetradecanoyltransferase (452 aa).

Tetradecanoyl-CoA-binding positions include 38–41, 171–173, and 179–183; these read YKFW, LCI, and SKRLA. The Proton acceptor; via carboxylate role is filled by Leu-452.

This sequence belongs to the NMT family. In terms of assembly, monomer.

It is found in the cytoplasm. The enzyme catalyses N-terminal glycyl-[protein] + tetradecanoyl-CoA = N-tetradecanoylglycyl-[protein] + CoA + H(+). Adds a myristoyl group to the N-terminal glycine residue of certain cellular proteins. The sequence is that of Glycylpeptide N-tetradecanoyltransferase (NMT1) from Eremothecium gossypii (strain ATCC 10895 / CBS 109.51 / FGSC 9923 / NRRL Y-1056) (Yeast).